A 247-amino-acid chain; its full sequence is Uridylate kinase (247 aa).

Lys14–Gly17 contributes to the ATP binding site. The segment at Gly22 to Gly27 is involved in allosteric activation by GTP. UMP is bound at residue Gly56. 2 residues coordinate ATP: Gly57 and Arg61. UMP is bound by residues Asp76 and Ile137–Thr144. Positions 165, 171, and 174 each coordinate ATP.

It belongs to the UMP kinase family. In terms of assembly, homohexamer.

Its subcellular location is the cytoplasm. It catalyses the reaction UMP + ATP = UDP + ADP. It participates in pyrimidine metabolism; CTP biosynthesis via de novo pathway; UDP from UMP (UMPK route): step 1/1. Its activity is regulated as follows. Allosterically activated by GTP. Inhibited by UTP, 5-bromo-UTP and 5-iodo-UTP. Its function is as follows. Catalyzes the reversible phosphorylation of UMP to UDP, with ATP as the most efficient phosphate donor. The chain is Uridylate kinase (pyrH) from Streptococcus pneumoniae serotype 4 (strain ATCC BAA-334 / TIGR4).